The sequence spans 338 residues: Lipoate-protein ligase A (338 aa).

The BPL/LPL catalytic domain occupies 29–216; the sequence is PATQRVLFLW…AFFAHYGERV (188 aa). ATP-binding positions include arginine 71, 76 to 79, and lysine 134; that span reads GAVF. A (R)-lipoate-binding site is contributed by lysine 134.

The protein belongs to the LplA family. In terms of assembly, monomer.

It is found in the cytoplasm. It catalyses the reaction L-lysyl-[lipoyl-carrier protein] + (R)-lipoate + ATP = N(6)-[(R)-lipoyl]-L-lysyl-[lipoyl-carrier protein] + AMP + diphosphate + H(+). The protein operates within protein modification; protein lipoylation via exogenous pathway; protein N(6)-(lipoyl)lysine from lipoate: step 1/2. It functions in the pathway protein modification; protein lipoylation via exogenous pathway; protein N(6)-(lipoyl)lysine from lipoate: step 2/2. Functionally, catalyzes both the ATP-dependent activation of exogenously supplied lipoate to lipoyl-AMP and the transfer of the activated lipoyl onto the lipoyl domains of lipoate-dependent enzymes. In Shigella sonnei (strain Ss046), this protein is Lipoate-protein ligase A.